The following is a 529-amino-acid chain: Cytochrome P450 monooxygenase ausG (529 aa).

Residues Leu-31 to Leu-51 form a helical membrane-spanning segment. Cys-470 lines the heme pocket.

The protein belongs to the cytochrome P450 family. It depends on heme as a cofactor.

Its subcellular location is the membrane. The protein operates within secondary metabolite biosynthesis; terpenoid biosynthesis. Cytochrome P450 monooxygenase; part of the gene cluster that mediates the biosynthesis of calidodehydroaustin, a fungal meroterpenoid. The first step of the pathway is the synthesis of 3,5-dimethylorsellinic acid by the polyketide synthase ausA. 3,5-dimethylorsellinic acid is then prenylated by the polyprenyl transferase ausN. Further epoxidation by the FAD-dependent monooxygenase ausM and cyclization by the probable terpene cyclase ausL lead to the formation of protoaustinoid A. Protoaustinoid A is then oxidized to spiro-lactone preaustinoid A3 by the combined action of the FAD-binding monooxygenases ausB and ausC, and the dioxygenase ausE. Acid-catalyzed keto-rearrangement and ring contraction of the tetraketide portion of preaustinoid A3 by ausJ lead to the formation of preaustinoid A4. The aldo-keto reductase ausK, with the help of ausH, is involved in the next step by transforming preaustinoid A4 into isoaustinone which is in turn hydroxylated by the P450 monooxygenase ausI to form austinolide. The cytochrome P450 monooxygenase ausG modifies austinolide to austinol. Austinol is further acetylated to austin by the O-acetyltransferase ausP, which spontaneously changes to dehydroaustin. The cytochrome P450 monooxygenase ausR then converts dehydroaustin is into 7-dehydrodehydroaustin. The hydroxylation catalyzed by ausR permits the O-acetyltransferase ausQ to add an additional acetyl group to the molecule, leading to the formation of acetoxydehydroaustin. The short chain dehydrogenase ausT catalyzes the reduction of the double bond present between carbon atoms 1 and 2 to convert 7-dehydrodehydroaustin into 1,2-dihydro-7-hydroxydehydroaustin. AusQ catalyzes not only an acetylation reaction but also the addition of the PKS ausV diketide product to 1,2-dihydro-7-hydroxydehydroaustin, forming precalidodehydroaustin. Finally, the iron/alpha-ketoglutarate-dependent dioxygenase converts precalidodehydroaustin into calidodehydroaustin. This Aspergillus calidoustus protein is Cytochrome P450 monooxygenase ausG.